We begin with the raw amino-acid sequence, 271 residues long: Plasmanylethanolamine desaturase 1 (271 aa).

Helical transmembrane passes span 48 to 68 (WCCV…LLLL), 75 to 95 (PLVM…SGLV), and 162 to 182 (VLEQ…FGTF). The short motif at 187-191 (HKWSH) is the Histidine box-1 element. A Histidine box-2 motif is present at residues 214–218 (HHRIH).

It belongs to the fatty acid desaturase CarF family.

The protein resides in the endoplasmic reticulum membrane. The catalysed reaction is a 1-(1,2-saturated alkyl)-2-acyl-sn-glycero-3-phosphoethanolamine + 2 Fe(II)-[cytochrome b5] + O2 + 2 H(+) = a 1-O-(1Z-alkenyl)-2-acyl-sn-glycero-3-phosphoethanolamine + 2 Fe(III)-[cytochrome b5] + 2 H2O. It catalyses the reaction a 1-O-hexadecyl-2-acyl-sn-glycero-3-phosphoethanolamine + 2 Fe(II)-[cytochrome b5] + O2 + 2 H(+) = a 1-O-(1Z-hexadecenyl)-2-acyl-sn-glycero-3-phosphoethanolamine + 2 Fe(III)-[cytochrome b5] + 2 H2O. The enzyme catalyses a 1-O-octadecyl-2-acyl-sn-glycero-3-phosphoethanolamine + 2 Fe(II)-[cytochrome b5] + O2 + 2 H(+) = a 1-O-(1Z-octadecenyl)-2-acyl-sn-glycero-3-phosphoethanolamine + 2 Fe(III)-[cytochrome b5] + 2 H2O. It carries out the reaction a 1-O-(9Z-octadecenyl)-2-acyl-sn-glycero-3-phosphoethanolamine + 2 Fe(II)-[cytochrome b5] + O2 + 2 H(+) = a 1-O-(1Z,9Z-octadecadienyl)-2-acyl-sn-glycero-3-phosphoethanolamine + 2 Fe(III)-[cytochrome b5] + 2 H2O. The protein operates within lipid metabolism; fatty acid metabolism. In terms of biological role, plasmanylethanolamine desaturase involved in plasmalogen biogenesis in the endoplasmic reticulum membrane. Plasmalogens are glycerophospholipids with a hydrocarbon chain linked by a vinyl ether bond at the glycerol sn-1 position, and are involved in antioxidative and signaling mechanisms. The polypeptide is Plasmanylethanolamine desaturase 1 (Bos taurus (Bovine)).